Here is a 207-residue protein sequence, read N- to C-terminus: MDNEKGLLIVLSGPSGVGKGTVRKRIFEDPSTSYKYSISMTTRQMREGEVDGVDYFFKTRDAFEALIKDDQFIEYAEYVGNYYGTPVQYVKDTMDEGHDVFLEIEVEGAKQVRKKFPDALFIFLAPPSLDHLRERLVGRGTESNEKIQSRINEARKEVEMMNLYDYVVVNDEVELAKNRIQCIVEAEHLKRERVEAKYRKMILEAKK.

A Guanylate kinase-like domain is found at 6–185 (GLLIVLSGPS…AKNRIQCIVE (180 aa)). Residue 13 to 20 (GPSGVGKG) participates in ATP binding.

This sequence belongs to the guanylate kinase family.

The protein localises to the cytoplasm. It carries out the reaction GMP + ATP = GDP + ADP. Its function is as follows. Essential for recycling GMP and indirectly, cGMP. The polypeptide is Guanylate kinase (Staphylococcus aureus (strain Mu50 / ATCC 700699)).